Here is a 670-residue protein sequence, read N- to C-terminus: DNA ligase (670 aa).

NAD(+) contacts are provided by residues 34 to 38, 83 to 84, and glutamate 113; these read DFEFD and SL. Lysine 115 functions as the N6-AMP-lysine intermediate in the catalytic mechanism. Arginine 136, glutamate 173, lysine 288, and lysine 312 together coordinate NAD(+). Positions 406, 409, 424, and 430 each coordinate Zn(2+). A BRCT domain is found at 591–670; it reads PESDKFAGKS…EAEFISLLNS (80 aa).

This sequence belongs to the NAD-dependent DNA ligase family. LigA subfamily. The cofactor is Mg(2+). It depends on Mn(2+) as a cofactor.

The catalysed reaction is NAD(+) + (deoxyribonucleotide)n-3'-hydroxyl + 5'-phospho-(deoxyribonucleotide)m = (deoxyribonucleotide)n+m + AMP + beta-nicotinamide D-nucleotide.. Its function is as follows. DNA ligase that catalyzes the formation of phosphodiester linkages between 5'-phosphoryl and 3'-hydroxyl groups in double-stranded DNA using NAD as a coenzyme and as the energy source for the reaction. It is essential for DNA replication and repair of damaged DNA. This chain is DNA ligase, found in Cytophaga hutchinsonii (strain ATCC 33406 / DSM 1761 / CIP 103989 / NBRC 15051 / NCIMB 9469 / D465).